The chain runs to 199 residues: NADH-quinone oxidoreductase subunit C (199 aa).

The protein belongs to the complex I 30 kDa subunit family. NDH-1 is composed of 14 different subunits. Subunits NuoB, C, D, E, F, and G constitute the peripheral sector of the complex.

Its subcellular location is the cell inner membrane. The enzyme catalyses a quinone + NADH + 5 H(+)(in) = a quinol + NAD(+) + 4 H(+)(out). Its function is as follows. NDH-1 shuttles electrons from NADH, via FMN and iron-sulfur (Fe-S) centers, to quinones in the respiratory chain. The immediate electron acceptor for the enzyme in this species is believed to be ubiquinone. Couples the redox reaction to proton translocation (for every two electrons transferred, four hydrogen ions are translocated across the cytoplasmic membrane), and thus conserves the redox energy in a proton gradient. The protein is NADH-quinone oxidoreductase subunit C of Cupriavidus pinatubonensis (strain JMP 134 / LMG 1197) (Cupriavidus necator (strain JMP 134)).